A 196-amino-acid chain; its full sequence is Alpha-crystallin A chain (196 aa).

Position 1 is an N-acetylmethionine (Met-1). A required for complex formation with BFSP1 and BFSP2 region spans residues Met-1–Glu-63. A Deamidated glutamine; partial modification is found at Gln-6. Ser-45 carries the post-translational modification Phosphoserine. Gln-50 carries the post-translational modification Deamidated glutamine; partial. The sHSP domain occupies His-76–Ser-185. Lys-93 and Lys-122 each carry N6-acetyllysine. Residue His-123 coordinates Zn(2+). The residue at position 124 (Asn-124) is a Deamidated asparagine; partial. Glu-125 and His-130 together coordinate Zn(2+). The residue at position 145 (Ser-145) is a Phosphoserine. Deamidated asparagine; partial is present on Asn-146. The disordered stretch occupies residues Lys-168 to Ser-196. Position 170 is a deamidated glutamine; partial (Gln-170). Basic and acidic residues predominate over residues Gly-176–Pro-190. His-177 is a binding site for Zn(2+). A glycan (O-linked (GlcNAc) serine) is linked at Ser-185.

The protein belongs to the small heat shock protein (HSP20) family. In terms of assembly, heteromer composed of three CRYAA and one CRYAB subunits. Inter-subunit bridging via zinc ions enhances stability, which is crucial as there is no protein turn over in the lens. Can also form homodimers and homotetramers (dimers of dimers) which serve as the building blocks of homooligomers. Within homooligomers, the zinc-binding motif is created from residues of 3 different molecules. His-123 and Glu-125 from one molecule are ligands of the zinc ion, and His-130 and His-177 residues from additional molecules complete the site with tetrahedral coordination geometry. Part of a complex required for lens intermediate filament formation composed of BFSP1, BFSP2 and CRYAA. Acetylation at Lys-93 may increase chaperone activity. In terms of processing, undergoes age-dependent proteolytical cleavage at the C-terminus.

It is found in the cytoplasm. Its subcellular location is the nucleus. Its function is as follows. Contributes to the transparency and refractive index of the lens. Acts as a chaperone, preventing aggregation of various proteins under a wide range of stress conditions. Required for the correct formation of lens intermediate filaments as part of a complex composed of BFSP1, BFSP2 and CRYAA. The chain is Alpha-crystallin A chain (CRYAA) from Mesocricetus auratus (Golden hamster).